Consider the following 218-residue polypeptide: Small ribosomal subunit protein uS3 (218 aa).

Residues 38-106 (LRSDLKKKLM…PVHLNIEEVK (69 aa)) form the KH type-2 domain.

Belongs to the universal ribosomal protein uS3 family. In terms of assembly, part of the 30S ribosomal subunit. Forms a tight complex with proteins S10 and S14.

Functionally, binds the lower part of the 30S subunit head. Binds mRNA in the 70S ribosome, positioning it for translation. In Legionella pneumophila (strain Lens), this protein is Small ribosomal subunit protein uS3.